Consider the following 507-residue polypeptide: ATP synthase subunit alpha, plastid (507 aa).

170-177 (GDRQTGKT) serves as a coordination point for ATP.

Belongs to the ATPase alpha/beta chains family. F-type ATPases have 2 components, CF(1) - the catalytic core - and CF(0) - the membrane proton channel. CF(1) has five subunits: alpha(3), beta(3), gamma(1), delta(1), epsilon(1). CF(0) has four main subunits: a, b, b' and c.

It is found in the plastid membrane. The catalysed reaction is ATP + H2O + 4 H(+)(in) = ADP + phosphate + 5 H(+)(out). Produces ATP from ADP in the presence of a proton gradient across the membrane. The alpha chain is a regulatory subunit. The polypeptide is ATP synthase subunit alpha, plastid (Aneura mirabilis (Parasitic liverwort)).